We begin with the raw amino-acid sequence, 448 residues long: Methylenetetrahydrofolate--tRNA-(uracil-5-)-methyltransferase TrmFO (448 aa).

13–18 (GAGLAG) serves as a coordination point for FAD.

The protein belongs to the MnmG family. TrmFO subfamily. Requires FAD as cofactor.

The protein resides in the cytoplasm. It carries out the reaction uridine(54) in tRNA + (6R)-5,10-methylene-5,6,7,8-tetrahydrofolate + NADH + H(+) = 5-methyluridine(54) in tRNA + (6S)-5,6,7,8-tetrahydrofolate + NAD(+). The catalysed reaction is uridine(54) in tRNA + (6R)-5,10-methylene-5,6,7,8-tetrahydrofolate + NADPH + H(+) = 5-methyluridine(54) in tRNA + (6S)-5,6,7,8-tetrahydrofolate + NADP(+). In terms of biological role, catalyzes the folate-dependent formation of 5-methyl-uridine at position 54 (M-5-U54) in all tRNAs. The chain is Methylenetetrahydrofolate--tRNA-(uracil-5-)-methyltransferase TrmFO from Streptococcus pyogenes serotype M5 (strain Manfredo).